The following is a 190-amino-acid chain: dCTP deaminase, dUMP-forming (190 aa).

DCTP is bound by residues 101–106 (KSSLGR), aspartate 119, 127–129 (TLE), glutamine 148, tyrosine 162, and glutamine 174. Catalysis depends on glutamate 129, which acts as the Proton donor/acceptor. The tract at residues 161 to 190 (PYGSSSVGSKYQGQRGPTPSRSYQNFVKND) is disordered. Residues 163–190 (GSSSVGSKYQGQRGPTPSRSYQNFVKND) are compositionally biased toward polar residues.

It belongs to the dCTP deaminase family. In terms of assembly, homotrimer.

The enzyme catalyses dCTP + 2 H2O = dUMP + NH4(+) + diphosphate. It functions in the pathway pyrimidine metabolism; dUMP biosynthesis; dUMP from dCTP: step 1/1. In terms of biological role, bifunctional enzyme that catalyzes both the deamination of dCTP to dUTP and the hydrolysis of dUTP to dUMP without releasing the toxic dUTP intermediate. This chain is dCTP deaminase, dUMP-forming, found in Mycolicibacterium vanbaalenii (strain DSM 7251 / JCM 13017 / BCRC 16820 / KCTC 9966 / NRRL B-24157 / PYR-1) (Mycobacterium vanbaalenii).